Here is a 726-residue protein sequence, read N- to C-terminus: tRNA endonuclease ANKZF1 (726 aa).

The segment at 40–61 is disordered; it reads LARAPRTSCSGSGERESPERKL. Over residues 52–61 the composition is skewed to basic and acidic residues; it reads GERESPERKL. The C2H2-type zinc finger occupies 72–96; it reads LFCSTCDQTFQNHQEQREHYKLDWH. Residues 120-130 are compositionally biased toward low complexity; the sequence is STGDLSSISGS. Residues 120–141 are disordered; that stretch reads STGDLSSISGSEDSDSASEEDL. Residues 131–141 are compositionally biased toward acidic residues; sequence EDSDSASEEDL. One can recognise a VLRF1 domain in the interval 203-346; that stretch reads GPRDCVVLMA…QRVLHKLTTL (144 aa). Q246 is an active-site residue. S258, S361, and S398 each carry phosphoserine. 2 disordered regions span residues 387 to 409 and 436 to 474; these read DEKEALGQNEESPKQGSGSEGED and RRRRKRNKKEKSRDQEAGAHRTLLQQTQEEEPSTQSSQA. Residues 436–445 show a composition bias toward basic residues; sequence RRRRKRNKKE. The span at 457 to 473 shows a compositional bias: low complexity; that stretch reads TLLQQTQEEEPSTQSSQ. Residues 493 to 526 form an ANK 1 repeat; sequence ELWNALLAACRAGDVGVLKLQLAPSPADPRVLSL. Residue S533 is modified to Phosphoserine. Residues 534–563 form an ANK 2 repeat; it reads GGFTLLHAAAAAGRGSVVRLLLEAGADPTV. Residues 588–656 form a disordered region; that stretch reads MEKNPDAYDY…RRFAALSDRE (69 aa). T607 carries the post-translational modification Phosphothreonine. Residues 609 to 659 are a coiled coil; that stretch reads EMEARQATRKREQKAARRQREEQQQRQQEQEEREREEQRRFAALSDREKRA. Basic and acidic residues predominate over residues 610-656; it reads MEARQATRKREQKAARRQREEQQQRQQEQEEREREEQRRFAALSDRE. The tract at residues 654 to 666 is VCP/p97-interacting motif (VIM); that stretch reads DREKRALAAERRL. Phosphoserine occurs at positions 675 and 680.

It belongs to the ANKZF1/VMS1 family. As to quaternary structure, interacts (via VIM motif) with VCP.

It is found in the cytoplasm. Functionally, endonuclease that cleaves polypeptidyl-tRNAs downstream of the ribosome-associated quality control (RQC) pathway to release incompletely synthesized polypeptides for degradation. The RQC pathway disassembles aberrantly stalled translation complexes to recycle or degrade the constituent parts. ANKZF1 acts downstream disassembly of stalled ribosomes and specifically cleaves off the terminal 3'-CCA nucleotides universal to all tRNAs from polypeptidyl-tRNAs, releasing (1) ubiquitinated polypeptides from 60S ribosomal subunit for degradation and (2) cleaved tRNAs. ANKZF1-cleaved tRNAs are then repaired and recycled by ELAC1 and TRNT1. Also plays a role in the cellular response to hydrogen peroxide and in the maintenance of mitochondrial integrity under conditions of cellular stress. The sequence is that of tRNA endonuclease ANKZF1 from Homo sapiens (Human).